A 319-amino-acid polypeptide reads, in one-letter code: Ferrochelatase (319 aa).

2 residues coordinate Fe cation: His-193 and Glu-274.

The protein belongs to the ferrochelatase family.

It localises to the cytoplasm. The catalysed reaction is heme b + 2 H(+) = protoporphyrin IX + Fe(2+). Its pathway is porphyrin-containing compound metabolism; protoheme biosynthesis; protoheme from protoporphyrin-IX: step 1/1. Its function is as follows. Catalyzes the ferrous insertion into protoporphyrin IX. The chain is Ferrochelatase from Actinobacillus pleuropneumoniae serotype 5b (strain L20).